The primary structure comprises 450 residues: Regulator of sigma-E protease RseP (450 aa).

A helical transmembrane segment spans residues 1–21 (MLSFLWDLASFIVALGVLITV). H22 contacts Zn(2+). Over 22 to 103 (HEFGHFWVAR…VGQRAAIIAA (82 aa)) the chain is Periplasmic. Residue E23 is part of the active site. H26 provides a ligand contact to Zn(2+). A helical membrane pass occupies residues 104–124 (GPVANFIFAIFAYWLVFIIGV). The Cytoplasmic portion of the chain corresponds to 125–375 (PGVRPVVGEI…KGAGMTAELG (251 aa)). 2 PDZ domains span residues 127 to 220 (VRPV…PRGP) and 222 to 309 (IEPV…PKVI). Residues 376–396 (VVYYLPFLALISVNLGIINLF) traverse the membrane as a helical segment. Topologically, residues 397–429 (PLPVLDGGHLLFLAIEKIKGGPVSERVQDFCYR) are periplasmic. A helical membrane pass occupies residues 430–450 (IGSILLVLLMGLALFNDFSRL).

It belongs to the peptidase M50B family. As to quaternary structure, interacts with RseA; the third transmembrane domain can be cross-linked to the transmembrane domain of RseA. Zn(2+) serves as cofactor.

The protein resides in the cell inner membrane. Its activity is regulated as follows. Inhibited by Zn(2+) chelator 1,10-phenanthroline. In terms of biological role, a site-2 regulated intramembrane protease (S2P) that cleaves the peptide bond between 'Ala-108' and 'Cys-109' in the transmembrane region of RseA. Part of a regulated intramembrane proteolysis (RIP) cascade. Acts on DegS-cleaved RseA to release the cytoplasmic domain of RseA, residue 'Val-148' of RseA may be required for this. This provides the cell with sigma-E (RpoE) activity through the proteolysis of RseA. Can also cleave sequences in transmembrane regions of other proteins (such as LacY) as well as liberated signal peptides of beta-lactamase, OmpF, LivK, SecM, PhoA, LivJ, OmpC, Lpp and TorA, probably within the membrane. Cleaves FecR within its transmembrane region to release an N-terminal cytoplasmic fragment which binds to sigma factor FecI, allowing it to activate transcription of the fecABCDE operon which mediates ferric citrate transport. This chain is Regulator of sigma-E protease RseP (rseP), found in Escherichia coli (strain K12).